The following is a 1483-amino-acid chain: Heme-responsive zinc finger transcription factor HAP1 (1483 aa).

The span at 1–50 (MSNTPYNSSVPSIASMTQSSVSRSPNMHTATTPGANTSSNSPPLHMSSDS) shows a compositional bias: polar residues. Residues 1-56 (MSNTPYNSSVPSIASMTQSSVSRSPNMHTATTPGANTSSNSPPLHMSSDSSKIKRK) form a disordered region. Zn(2+) contacts are provided by cysteine 64, cysteine 67, cysteine 74, cysteine 81, cysteine 84, and cysteine 93. A DNA-binding region (zn(2)-C6 fungal-type) is located at residues 64–93 (CTICRKRKVKCDKLRPHCQQCTKTGVAHLC). A coiled-coil region spans residues 105–134 (EKELLKDNELKKLRERVKSLEKTLSKVHSS). The tract at residues 126–208 (KTLSKVHSSP…ANSSSLSISN (83 aa)) is disordered. Positions 130–142 (KVHSSPSSNSLKS) are enriched in low complexity. Polar residues-rich tracts occupy residues 143-152 (YNTPESSNLF) and 160-176 (TLVN…SHMH). A compositionally biased stretch (low complexity) spans 177–208 (QQQQQQQQQEQQQDFSRSANANANSSSLSISN). The segment at 244–444 (KGDPYLKLLW…NTIPHHQPQS (201 aa)) is heme-responsive; required for HMC formation. HRM repeat units lie at residues 280 to 285 (KCPINH), 299 to 304 (KCPVDH), 323 to 328 (KCPVDH), 347 to 352 (RCPVDH), 389 to 394 (KCPVDH), and 415 to 420 (RCPIDH). Polar residues-rich tracts occupy residues 432-447 (STHN…SGSH) and 706-734 (QLNA…NPTL). Disordered stretches follow at residues 432-458 (STHN…NRKH) and 706-767 (QLNA…KENQ). A compositionally biased stretch (low complexity) spans 735–759 (NNNMSAATTNSSSRSGSADSRSGSN). One copy of the HRM 7 repeat lies at 1192–1197 (KCPVYQ).

As to quaternary structure, binds DNA as a homodimer. Interacts with SRO9 and YDJ1. In the absence of heme, binds to at least four cellular proteins, including YDJ1 and SRO9, forming a high-molecular-weight complex (HMC) which results in repression of its activity and dictates its DNA-binding specificity.

It is found in the nucleus. Regulation of oxygen dependent gene expression. It modulates the expression of Iso-1 (CYP1) and Iso-2 (CYP3) cytochrome c. In response to heme, promotes transcription of genes encoding functions required for respiration, controlling oxidative damage and repression of anaerobic genes. Binds to the sequence 5'-CGGNNNTNNCGG-3'. This is Heme-responsive zinc finger transcription factor HAP1 (HAP1) from Saccharomyces cerevisiae (strain Lalvin EC1118 / Prise de mousse) (Baker's yeast).